A 131-amino-acid polypeptide reads, in one-letter code: Small ribosomal subunit protein bS6m (131 aa).

This sequence belongs to the bacterial ribosomal protein bS6 family. Component of the mitochondrial small ribosomal subunit (mt-SSU). Mature yeast 74S mitochondrial ribosomes consist of a small (37S) and a large (54S) subunit. The 37S small subunit contains a 15S ribosomal RNA (15S mt-rRNA) and 34 different proteins. The 54S large subunit contains a 21S rRNA (21S mt-rRNA) and 46 different proteins.

The protein resides in the mitochondrion. Component of the mitochondrial ribosome (mitoribosome), a dedicated translation machinery responsible for the synthesis of mitochondrial genome-encoded proteins, including at least some of the essential transmembrane subunits of the mitochondrial respiratory chain. The mitoribosomes are attached to the mitochondrial inner membrane and translation products are cotranslationally integrated into the membrane. This Saccharomyces cerevisiae (strain ATCC 204508 / S288c) (Baker's yeast) protein is Small ribosomal subunit protein bS6m (MRP17).